We begin with the raw amino-acid sequence, 92 residues long: CRISPR-associated endoribonuclease Cas2 2 (92 aa).

Position 12 (aspartate 12) interacts with Mg(2+).

The protein belongs to the CRISPR-associated endoribonuclease Cas2 protein family. As to quaternary structure, homodimer, forms a heterotetramer with a Cas1 homodimer. The cofactor is Mg(2+).

Its function is as follows. CRISPR (clustered regularly interspaced short palindromic repeat), is an adaptive immune system that provides protection against mobile genetic elements (viruses, transposable elements and conjugative plasmids). CRISPR clusters contain sequences complementary to antecedent mobile elements and target invading nucleic acids. CRISPR clusters are transcribed and processed into CRISPR RNA (crRNA). Functions as a ssRNA-specific endoribonuclease. Involved in the integration of spacer DNA into the CRISPR cassette. In Archaeoglobus fulgidus (strain ATCC 49558 / DSM 4304 / JCM 9628 / NBRC 100126 / VC-16), this protein is CRISPR-associated endoribonuclease Cas2 2 (cas22).